The following is a 497-amino-acid chain: 3-ketoacyl-CoA synthase 6 (497 aa).

Helical transmembrane passes span 25–45 and 64–84; these read LVNHFLSFLLIPIMAIVAVEL and LVQVLCSSFFVIFISTVYFMS. The region spanning 81 to 370 is the FAE domain; the sequence is YFMSKPRTIY…FLTSLIGRKI (290 aa). Residues C225, H304, H388, H392, H421, and N425 contribute to the active site.

The protein belongs to the thiolase-like superfamily. Chalcone/stilbene synthases family. In terms of tissue distribution, in epidermal cells of aerial tissues and in the tapetum of anthers near maturity. Expressed in siliques, flowers and leaves.

Its subcellular location is the endoplasmic reticulum membrane. The catalysed reaction is a very-long-chain acyl-CoA + malonyl-CoA + H(+) = a very-long-chain 3-oxoacyl-CoA + CO2 + CoA. It functions in the pathway lipid metabolism; fatty acid biosynthesis. Its activity is regulated as follows. Strongly inhibited by metazachlor and mefluidide. Functionally, contributes to cuticular wax and suberin biosynthesis. Involved in both decarbonylation and acyl-reduction wax synthesis pathways. Required for elongation of C24 fatty acids, an essential step of the cuticular wax production. Major condensing enzyme for stem wax and pollen coat lipid biosynthesis. The polypeptide is 3-ketoacyl-CoA synthase 6 (Arabidopsis thaliana (Mouse-ear cress)).